The sequence spans 30 residues: NADH-ubiquinone oxidoreductase chain 5 (30 aa).

A helical membrane pass occupies residues 7 to 27; the sequence is NIIIIINSSLIIILFSSIFFF.

This sequence belongs to the complex I subunit 5 family.

It localises to the mitochondrion inner membrane. The enzyme catalyses a ubiquinone + NADH + 5 H(+)(in) = a ubiquinol + NAD(+) + 4 H(+)(out). In terms of biological role, core subunit of the mitochondrial membrane respiratory chain NADH dehydrogenase (Complex I) that is believed to belong to the minimal assembly required for catalysis. Complex I functions in the transfer of electrons from NADH to the respiratory chain. The immediate electron acceptor for the enzyme is believed to be ubiquinone. The protein is NADH-ubiquinone oxidoreductase chain 5 (ND5) of Pisaster ochraceus (Ochre sea star).